The chain runs to 185 residues: Ribosome-recycling factor (185 aa).

This sequence belongs to the RRF family.

The protein resides in the cytoplasm. Responsible for the release of ribosomes from messenger RNA at the termination of protein biosynthesis. May increase the efficiency of translation by recycling ribosomes from one round of translation to another. The protein is Ribosome-recycling factor of Nocardia farcinica (strain IFM 10152).